Reading from the N-terminus, the 181-residue chain is Nucleoside triphosphate/diphosphate phosphatase (181 aa).

Catalysis depends on R26, which acts as the Proton donor. Positions 90, 106, 108, 110, 123, and 126 each coordinate Mg(2+).

It belongs to the Ntdp family. The cofactor is Mg(2+).

It carries out the reaction a ribonucleoside 5'-triphosphate + H2O = a ribonucleoside 5'-diphosphate + phosphate + H(+). The enzyme catalyses a ribonucleoside 5'-diphosphate + H2O = a ribonucleoside 5'-phosphate + phosphate + H(+). Its function is as follows. Has nucleoside phosphatase activity towards nucleoside triphosphates and nucleoside diphosphates. This Staphylococcus carnosus (strain TM300) protein is Nucleoside triphosphate/diphosphate phosphatase.